A 177-amino-acid polypeptide reads, in one-letter code: Ribulose bisphosphate carboxylase small subunit, chloroplastic 5 (177 aa).

The transit peptide at 1–56 directs the protein to the chloroplast; it reads MASSMMASTAAVARAGPAQSSMVAPFNGLRSSVAFPATRKANNDLSTLPSNGGRVS.

The protein belongs to the RuBisCO small chain family. As to quaternary structure, heterohexadecamer of 8 large and 8 small subunits.

The protein localises to the plastid. It is found in the chloroplast. Its function is as follows. RuBisCO catalyzes two reactions: the carboxylation of D-ribulose 1,5-bisphosphate, the primary event in carbon dioxide fixation, as well as the oxidative fragmentation of the pentose substrate. Both reactions occur simultaneously and in competition at the same active site. Although the small subunit is not catalytic it is essential for maximal activity. This is Ribulose bisphosphate carboxylase small subunit, chloroplastic 5 from Lemna gibba (Swollen duckweed).